A 463-amino-acid polypeptide reads, in one-letter code: mRNA-capping enzyme subunit alpha (463 aa).

The N6-GMP-lysine intermediate role is filled by Lys-66. Residues Trp-404–Glu-463 form a disordered region. Residues Asp-441–Asp-455 are compositionally biased toward acidic residues.

It belongs to the eukaryotic GTase family. Heterodimer. The mRNA-capping enzyme is composed of two separate chains alpha and beta, respectively a mRNA guanylyltransferase and an mRNA 5'-triphosphate monophosphatase.

It localises to the nucleus. The catalysed reaction is a 5'-end diphospho-ribonucleoside in mRNA + GTP + H(+) = a 5'-end (5'-triphosphoguanosine)-ribonucleoside in mRNA + diphosphate. In terms of biological role, second step of mRNA capping. Transfer of the GMP moiety of GTP to the 5'-end of RNA via an enzyme-GMP covalent reaction intermediate. The polypeptide is mRNA-capping enzyme subunit alpha (CEG1) (Eremothecium gossypii (strain ATCC 10895 / CBS 109.51 / FGSC 9923 / NRRL Y-1056) (Yeast)).